The chain runs to 178 residues: Translation initiation factor IF-3 (178 aa).

The disordered stretch occupies residues methionine 1–aspartate 20.

Belongs to the IF-3 family. As to quaternary structure, monomer.

Its subcellular location is the cytoplasm. In terms of biological role, IF-3 binds to the 30S ribosomal subunit and shifts the equilibrium between 70S ribosomes and their 50S and 30S subunits in favor of the free subunits, thus enhancing the availability of 30S subunits on which protein synthesis initiation begins. This Mesorhizobium japonicum (strain LMG 29417 / CECT 9101 / MAFF 303099) (Mesorhizobium loti (strain MAFF 303099)) protein is Translation initiation factor IF-3.